Reading from the N-terminus, the 366-residue chain is Type 2 DNA topoisomerase 6 subunit A (366 aa).

A Topo IIA-type catalytic domain is found at 7–146 (SDETEARDQL…FHMRPEESGA (140 aa)). Catalysis depends on Tyr-101, which acts as the O-(5'-phospho-DNA)-tyrosine intermediate. The Mg(2+) site is built by Glu-199 and Asp-251.

Belongs to the TOP6A family. In terms of assembly, homodimer. Heterotetramer of two Top6A and two Top6B chains. It depends on Mg(2+) as a cofactor.

The enzyme catalyses ATP-dependent breakage, passage and rejoining of double-stranded DNA.. In terms of biological role, relaxes both positive and negative superturns and exhibits a strong decatenase activity. This Halobacterium salinarum (strain ATCC 700922 / JCM 11081 / NRC-1) (Halobacterium halobium) protein is Type 2 DNA topoisomerase 6 subunit A.